We begin with the raw amino-acid sequence, 257 residues long: Protein UL133 (257 aa).

2 helical membrane passes run 14–34 (WGVP…IWCL) and 45–65 (PGIA…AYLI). The disordered stretch occupies residues 149–232 (PTVFVPPPSE…AMPQMPPGVA (84 aa)). Over residues 164–175 (VIPPQPPTPTSE) the composition is skewed to pro residues. Positions 179 to 193 (KKGRAKDKPKGRPKN) are enriched in basic residues. The segment covering 214–228 (GGPPDASPPAMPQMP) has biased composition (pro residues).

Its subcellular location is the host Golgi apparatus membrane. The protein is Protein UL133 (UL133) of Human cytomegalovirus (strain Merlin) (HHV-5).